A 220-amino-acid chain; its full sequence is UPF0502 protein Pnap_3223 (220 aa).

Belongs to the UPF0502 family.

The protein is UPF0502 protein Pnap_3223 of Polaromonas naphthalenivorans (strain CJ2).